The chain runs to 538 residues: Thermosome subunit beta (538 aa).

The segment at serine 518 to methionine 538 is disordered. Gly residues predominate over residues glutamate 528 to methionine 538.

The protein belongs to the TCP-1 chaperonin family. Forms a Heterooligomeric complex of two stacked eight-membered rings.

Its function is as follows. Molecular chaperone; binds unfolded polypeptides in vitro, and has a weak ATPase activity. This is Thermosome subunit beta (thsB) from Methanothermobacter thermautotrophicus (strain ATCC 29096 / DSM 1053 / JCM 10044 / NBRC 100330 / Delta H) (Methanobacterium thermoautotrophicum).